Reading from the N-terminus, the 331-residue chain is Phosphoribosylformylglycinamidine cyclo-ligase (331 aa).

Belongs to the AIR synthase family.

The protein localises to the cytoplasm. The catalysed reaction is 2-formamido-N(1)-(5-O-phospho-beta-D-ribosyl)acetamidine + ATP = 5-amino-1-(5-phospho-beta-D-ribosyl)imidazole + ADP + phosphate + H(+). Its pathway is purine metabolism; IMP biosynthesis via de novo pathway; 5-amino-1-(5-phospho-D-ribosyl)imidazole from N(2)-formyl-N(1)-(5-phospho-D-ribosyl)glycinamide: step 2/2. This Clostridium kluyveri (strain NBRC 12016) protein is Phosphoribosylformylglycinamidine cyclo-ligase.